We begin with the raw amino-acid sequence, 366 residues long: G kinase-anchoring protein 1 (366 aa).

The interval 1–95 (MASAVLSSVP…SHAVCNAQHD (95 aa)) is interaction with IRS1. Disordered stretches follow at residues 20-110 (QVDS…REEN) and 147-177 (EYEDAENTSTQSKVMNKKDKRKNHQGKDRPL). Phosphoserine occurs at positions 23, 25, and 27. Residues 39 to 50 (TGKSQTLGSKST) show a composition bias toward polar residues. A coiled-coil region spans residues 47-77 (SKSTTNEKKREKRRKKKEQQQSEANELRNLA). Ser106 is modified (phosphoserine; by PKG). Coiled-coil stretches lie at residues 128 to 160 (ADLEKALLLSKLEYEEHKKEYEDAENTSTQSKV) and 243 to 353 (EHNQ…YQGG).

It belongs to the GKAP1 family. Interacts with PRKG1 and IRS1.

The protein resides in the golgi apparatus. Its function is as follows. Regulates insulin-dependent IRS1 tyrosine phosphorylation in adipocytes by modulating the availability of IRS1 to IR tyrosine kinase. Its association with IRS1 is required for insulin-induced translocation of SLC2A4 to the cell membrane. Involved in TNF-induced impairment of insulin-dependent IRS1 tyrosine phosphorylation. The chain is G kinase-anchoring protein 1 (GKAP1) from Homo sapiens (Human).